The following is a 219-amino-acid chain: ATP-dependent dethiobiotin synthetase BioD (219 aa).

12 to 17 contributes to the ATP binding site; the sequence is DLGKTH. Residue T16 participates in Mg(2+) binding. Residue K37 is part of the active site. S41 is a binding site for substrate. Residues D52, 115 to 118, and 175 to 176 each bind ATP; these read EGAG and SE. Mg(2+) contacts are provided by D52 and E115.

The protein belongs to the dethiobiotin synthetase family. In terms of assembly, homodimer. The cofactor is Mg(2+).

The protein resides in the cytoplasm. It carries out the reaction (7R,8S)-7,8-diammoniononanoate + CO2 + ATP = (4R,5S)-dethiobiotin + ADP + phosphate + 3 H(+). Its pathway is cofactor biosynthesis; biotin biosynthesis; biotin from 7,8-diaminononanoate: step 1/2. Catalyzes a mechanistically unusual reaction, the ATP-dependent insertion of CO2 between the N7 and N8 nitrogen atoms of 7,8-diaminopelargonic acid (DAPA, also called 7,8-diammoniononanoate) to form a ureido ring. The protein is ATP-dependent dethiobiotin synthetase BioD of Caulobacter vibrioides (strain ATCC 19089 / CIP 103742 / CB 15) (Caulobacter crescentus).